A 62-amino-acid polypeptide reads, in one-letter code: uncharacterized protein (62 aa).

The protein belongs to the asfivirus C62L family.

This is an uncharacterized protein from African swine fever virus (isolate Tick/South Africa/Pretoriuskop Pr4/1996) (ASFV).